A 156-amino-acid polypeptide reads, in one-letter code: Small ribosomal subunit protein uS7 (156 aa).

It belongs to the universal ribosomal protein uS7 family. As to quaternary structure, part of the 30S ribosomal subunit. Contacts proteins S9 and S11.

Its function is as follows. One of the primary rRNA binding proteins, it binds directly to 16S rRNA where it nucleates assembly of the head domain of the 30S subunit. Is located at the subunit interface close to the decoding center, probably blocks exit of the E-site tRNA. The polypeptide is Small ribosomal subunit protein uS7 (Thermoanaerobacter sp. (strain X514)).